Here is a 396-residue protein sequence, read N- to C-terminus: Tryptophan synthase beta chain 1 (396 aa).

K86 is subject to N6-(pyridoxal phosphate)lysine.

Belongs to the TrpB family. As to quaternary structure, tetramer of two alpha and two beta chains. It depends on pyridoxal 5'-phosphate as a cofactor.

It carries out the reaction (1S,2R)-1-C-(indol-3-yl)glycerol 3-phosphate + L-serine = D-glyceraldehyde 3-phosphate + L-tryptophan + H2O. Its pathway is amino-acid biosynthesis; L-tryptophan biosynthesis; L-tryptophan from chorismate: step 5/5. Functionally, the beta subunit is responsible for the synthesis of L-tryptophan from indole and L-serine. This Vibrio parahaemolyticus serotype O3:K6 (strain RIMD 2210633) protein is Tryptophan synthase beta chain 1 (trpB1).